The sequence spans 185 residues: Ribosome-recycling factor (185 aa).

It belongs to the RRF family.

Its subcellular location is the cytoplasm. Responsible for the release of ribosomes from messenger RNA at the termination of protein biosynthesis. May increase the efficiency of translation by recycling ribosomes from one round of translation to another. The polypeptide is Ribosome-recycling factor (Chromobacterium violaceum (strain ATCC 12472 / DSM 30191 / JCM 1249 / CCUG 213 / NBRC 12614 / NCIMB 9131 / NCTC 9757 / MK)).